The chain runs to 676 residues: Cysteine-rich receptor-like protein kinase 4 (676 aa).

Positions 1–16 (MSFFWLFPFLLHLSFA) are cleaved as a signal peptide. Residues 17–287 (DSLSPLSAPV…ISERGKGRNS (271 aa)) lie on the Extracellular side of the membrane. 2 consecutive Gnk2-homologous domains span residues 31-135 (HLNH…HRNI) and 146-246 (ILLN…NYSF). N-linked (GlcNAc...) asparagine glycans are attached at residues asparagine 33, asparagine 46, asparagine 64, asparagine 152, asparagine 181, asparagine 243, and asparagine 248. Residues 252 to 279 (TRSSSPPSLPPRSTPQQQLKLAPPPLIS) form a disordered region. N-linked (GlcNAc...) asparagine glycosylation occurs at asparagine 286. A helical transmembrane segment spans residues 288–308 (SVIIVVVVPIIALLLLFVAFF). At 309–676 (SLRAKKTRTN…DASITNVTPR (368 aa)) the chain is on the cytoplasmic side. A Protein kinase domain is found at 351 to 631 (FCETNKLGQG…QMLTTSSIAL (281 aa)). ATP is bound by residues 357-365 (LGQGGFGEV) and lysine 379. Tyrosine 424 bears the Phosphotyrosine mark. Catalysis depends on aspartate 476, which acts as the Proton acceptor. Threonine 516 bears the Phosphothreonine mark. Tyrosine 524 carries the post-translational modification Phosphotyrosine.

It belongs to the protein kinase superfamily. Ser/Thr protein kinase family. CRK subfamily.

It is found in the membrane. It carries out the reaction L-seryl-[protein] + ATP = O-phospho-L-seryl-[protein] + ADP + H(+). It catalyses the reaction L-threonyl-[protein] + ATP = O-phospho-L-threonyl-[protein] + ADP + H(+). The sequence is that of Cysteine-rich receptor-like protein kinase 4 (CRK4) from Arabidopsis thaliana (Mouse-ear cress).